We begin with the raw amino-acid sequence, 82 residues long: NAD(P)H-quinone oxidoreductase subunit O (82 aa).

Belongs to the complex I NdhO subunit family. NDH-1 can be composed of about 15 different subunits; different subcomplexes with different compositions have been identified which probably have different functions.

The protein resides in the cellular thylakoid membrane. It carries out the reaction a plastoquinone + NADH + (n+1) H(+)(in) = a plastoquinol + NAD(+) + n H(+)(out). The catalysed reaction is a plastoquinone + NADPH + (n+1) H(+)(in) = a plastoquinol + NADP(+) + n H(+)(out). Its function is as follows. NDH-1 shuttles electrons from an unknown electron donor, via FMN and iron-sulfur (Fe-S) centers, to quinones in the respiratory and/or the photosynthetic chain. The immediate electron acceptor for the enzyme in this species is believed to be plastoquinone. Couples the redox reaction to proton translocation, and thus conserves the redox energy in a proton gradient. Cyanobacterial NDH-1 also plays a role in inorganic carbon-concentration. The protein is NAD(P)H-quinone oxidoreductase subunit O of Prochlorococcus marinus (strain MIT 9211).